We begin with the raw amino-acid sequence, 336 residues long: Eukaryotic translation initiation factor 3 subunit I (336 aa).

5 WD repeats span residues 8–47 (GHER…RLGT), 50–91 (GHLG…KVWE), 146–185 (CNES…QLEN), 190–229 (EFDH…ILKT), and 287–326 (GHFG…FDFM).

The protein belongs to the eIF-3 subunit I family. Component of the eukaryotic translation initiation factor 3 (eIF-3) complex.

Its subcellular location is the cytoplasm. Functionally, component of the eukaryotic translation initiation factor 3 (eIF-3) complex, which is involved in protein synthesis of a specialized repertoire of mRNAs and, together with other initiation factors, stimulates binding of mRNA and methionyl-tRNAi to the 40S ribosome. The eIF-3 complex specifically targets and initiates translation of a subset of mRNAs involved in cell proliferation. This chain is Eukaryotic translation initiation factor 3 subunit I (tif34), found in Aspergillus terreus (strain NIH 2624 / FGSC A1156).